Here is a 448-residue protein sequence, read N- to C-terminus: RuvB-like 2 (448 aa).

73 to 80 provides a ligand contact to ATP; sequence GEPGAGKT.

Belongs to the RuvB family. Forms homohexameric rings. May form a dodecamer with ruvb-1 made of two stacked hexameric rings. In terms of tissue distribution, expressed in gonadal cells.

It localises to the cytoplasm. The protein resides in the nucleus. It carries out the reaction ATP + H2O = ADP + phosphate + H(+). Functionally, possesses single-stranded DNA-stimulated ATPase and ATP-dependent DNA helicase (5' to 3') activity suggesting a role in nuclear processes such as recombination and transcription. May participate in several chromatin remodeling complexes that mediate the ATP-dependent exchange of histones and remodel chromatin by shifting nucleosomes. Involvement in these complexes is likely required for transcriptional activation of selected genes and DNA repair in response to DNA damage. Has a role in gonadal development. Involved in the endoplasmic reticulum (ER)-associated degradation (ERAD) pathway where it negatively regulates expression of ER stress response genes. Specifically, negatively controls the expression of ER homeostasis regulator ckb-2 in a cdc-48.1/2-dependent manner. In Caenorhabditis elegans, this protein is RuvB-like 2.